We begin with the raw amino-acid sequence, 343 residues long: Ribonucleoside-diphosphate reductase small subunit (343 aa).

Fe cation is bound by residues aspartate 101, glutamate 131, and histidine 134. Tyrosine 138 is an active-site residue. The chain crosses the membrane as a helical span at residues 188 to 208; the sequence is ILMILIEGIFFSASFAAIAYL. 3 residues coordinate Fe cation: glutamate 194, glutamate 228, and histidine 231.

Belongs to the ribonucleoside diphosphate reductase small chain family. Heterotetramer composed of a homodimer of the large subunit (R1) and a homodimer of the small subunit (R2). Larger multisubunit protein complex are also active, composed of (R1)n(R2)n. Requires Fe cation as cofactor.

Its subcellular location is the host membrane. The enzyme catalyses a 2'-deoxyribonucleoside 5'-diphosphate + [thioredoxin]-disulfide + H2O = a ribonucleoside 5'-diphosphate + [thioredoxin]-dithiol. Its function is as follows. Ribonucleoside-diphosphate reductase holoenzyme provides the precursors necessary for viral DNA synthesis. Allows virus growth in non-dividing cells, as well as reactivation from latency in infected hosts. Catalyzes the biosynthesis of deoxyribonucleotides from the corresponding ribonucleotides. The protein is Ribonucleoside-diphosphate reductase small subunit of Gallid herpesvirus 2 (strain Chicken/Md5/ATCC VR-987) (GaHV-2).